Reading from the N-terminus, the 127-residue chain is Odontogenesis-associated phosphoprotein (127 aa).

The N-terminal stretch at 1–23 is a signal peptide; that stretch reads MAPGFHFSWLLVSWLVVTTVKGQ.

In terms of tissue distribution, expressed in enamel organs and not expressed in the heart, kidney, or spleen.

It localises to the secreted. Its function is as follows. May promote nucleation of hydroxyapatite. The chain is Odontogenesis-associated phosphoprotein from Rattus norvegicus (Rat).